Here is a 306-residue protein sequence, read N- to C-terminus: Aspartate carbamoyltransferase catalytic subunit (306 aa).

The carbamoyl phosphate site is built by Arg55 and Thr56. Lys84 serves as a coordination point for L-aspartate. Arg105, His133, and Gln136 together coordinate carbamoyl phosphate. L-aspartate-binding residues include Arg166 and Arg227. Residues Leu265 and Pro266 each coordinate carbamoyl phosphate.

Belongs to the aspartate/ornithine carbamoyltransferase superfamily. ATCase family. In terms of assembly, heterododecamer (2C3:3R2) of six catalytic PyrB chains organized as two trimers (C3), and six regulatory PyrI chains organized as three dimers (R2).

The catalysed reaction is carbamoyl phosphate + L-aspartate = N-carbamoyl-L-aspartate + phosphate + H(+). Its pathway is pyrimidine metabolism; UMP biosynthesis via de novo pathway; (S)-dihydroorotate from bicarbonate: step 2/3. Its function is as follows. Catalyzes the condensation of carbamoyl phosphate and aspartate to form carbamoyl aspartate and inorganic phosphate, the committed step in the de novo pyrimidine nucleotide biosynthesis pathway. This Neisseria meningitidis serogroup C (strain 053442) protein is Aspartate carbamoyltransferase catalytic subunit.